The following is a 192-amino-acid chain: Probable Brix domain-containing ribosomal biogenesis protein (192 aa).

The region spanning 2–191 (RPAAITTSQR…DFRTKDERMK (190 aa)) is the Brix domain.

Probably involved in the biogenesis of the ribosome. This is Probable Brix domain-containing ribosomal biogenesis protein from Methanopyrus kandleri (strain AV19 / DSM 6324 / JCM 9639 / NBRC 100938).